We begin with the raw amino-acid sequence, 244 residues long: Chaperone protein FimB/FhaD (244 aa).

The signal sequence occupies residues Met1–Ala24.

The protein belongs to the periplasmic pilus chaperone family.

It is found in the periplasm. Its function is as follows. Required for the biogenesis of the filamentous hemagglutinin and the fimbria. This chain is Chaperone protein FimB/FhaD (fimB), found in Bordetella pertussis (strain Tohama I / ATCC BAA-589 / NCTC 13251).